We begin with the raw amino-acid sequence, 193 residues long: Probable nicotinate-nucleotide adenylyltransferase (193 aa).

This sequence belongs to the NadD family.

The catalysed reaction is nicotinate beta-D-ribonucleotide + ATP + H(+) = deamido-NAD(+) + diphosphate. It participates in cofactor biosynthesis; NAD(+) biosynthesis; deamido-NAD(+) from nicotinate D-ribonucleotide: step 1/1. In terms of biological role, catalyzes the reversible adenylation of nicotinate mononucleotide (NaMN) to nicotinic acid adenine dinucleotide (NaAD). This is Probable nicotinate-nucleotide adenylyltransferase from Chlorobium phaeovibrioides (strain DSM 265 / 1930) (Prosthecochloris vibrioformis (strain DSM 265)).